A 332-amino-acid chain; its full sequence is RNA polymerase II holoenzyme cyclin-like subunit (332 aa).

A Cyclin N-terminal domain is found at 74-175 (RIYCYFLIMK…LIEELQSYMI (102 aa)).

The protein belongs to the cyclin family. Cyclin C subfamily. In terms of assembly, component of the SRB8-11 complex, a regulatory module of the Mediator complex.

Its subcellular location is the nucleus. Its function is as follows. Component of the SRB8-11 complex. The SRB8-11 complex is a regulatory module of the Mediator complex which is itself involved in regulation of basal and activated RNA polymerase II-dependent transcription. The SRB8-11 complex may be involved in the transcriptional repression of a subset of genes regulated by Mediator. It may inhibit the association of the Mediator complex with RNA polymerase II to form the holoenzyme complex. The SRB8-11 complex phosphorylates the C-terminal domain (CTD) of the largest subunit of RNA polymerase II. This Eremothecium gossypii (strain ATCC 10895 / CBS 109.51 / FGSC 9923 / NRRL Y-1056) (Yeast) protein is RNA polymerase II holoenzyme cyclin-like subunit (SSN8).